Here is a 646-residue protein sequence, read N- to C-terminus: Serine/threonine-protein kinase max-2 (646 aa).

Positions 19–40 are disordered; sequence FSPSDKDKDRDDEMKPSSSAMD. A compositionally biased stretch (basic and acidic residues) spans 22 to 33; sequence SDKDKDRDDEMK. The 14-residue stretch at 41-54 folds into the CRIB domain; that stretch reads ISQPYNTVHRVHVG. A disordered region spans residues 136 to 345; it reads LQCSNGSATS…PPPPEEPPVR (210 aa). Low complexity-rich tracts occupy residues 142 to 157 and 167 to 180; these read SATS…SSSA and LSTA…LSLS. Positions 196–205 are enriched in polar residues; the sequence is SAPQLKTFTG. Residues 214 to 223 show a composition bias toward pro residues; that stretch reads SPFPPQPPVL. Over residues 229–245 the composition is skewed to low complexity; that stretch reads TASAVATTTTNPTTSNG. Positions 246–262 are enriched in pro residues; the sequence is APPPVPGSKGPPVPPKP. Low complexity-rich tracts occupy residues 273–307 and 323–334; these read SSGC…DGDV and KNGNTTTNKTTV. A Protein kinase domain is found at 376-627; it reads YEMKKQIGVG…TTELLAHPFL (252 aa). Residues 382-390 and Lys-405 each bind ATP; that span reads IGVGASGTV. The Proton acceptor role is filled by Asp-496.

Belongs to the protein kinase superfamily. STE Ser/Thr protein kinase family. STE20 subfamily. As to quaternary structure, interacts with mlk-1; the interaction is independent of max-2 and mlk-1 kinase activities. Interacts with mig-2 (GTP-bound form). The cofactor is Mg(2+).

It localises to the perikaryon. The protein localises to the cell projection. Its subcellular location is the dendrite. The protein resides in the cytoplasm. It carries out the reaction L-seryl-[protein] + ATP = O-phospho-L-seryl-[protein] + ADP + H(+). The enzyme catalyses L-threonyl-[protein] + ATP = O-phospho-L-threonyl-[protein] + ADP + H(+). Serine/threonine-protein kinase, which phosphorylates mlk-1. Involved in the stress response to heavy metals by activating the mlk-1/mek-1/kgb-1 pathway. In ventral cord commissural motoneurons, required for dorsal axon guidance downstream of unc-6/netrin repulsion receptor unc-5 and probably of Rho GTPases ced-10 and mig-2. Plays a redundant role with mig-10 in orientating axonal growth of HSN neurons. Plays a redundant role with pak-1 in P neuroblast migration and in distal tip cell (DTC)-mediated guidance of gonad elongation probably downstream of Rho GTPases. In association with pak-2, plays a role in embryogenesis. In association with pak-1, may be involved in spermatogenesis. The chain is Serine/threonine-protein kinase max-2 from Caenorhabditis elegans.